Here is a 344-residue protein sequence, read N- to C-terminus: Intraflagellar transport protein 46 (344 aa).

A compositionally biased stretch (acidic residues) spans methionine 1–aspartate 16. The interval methionine 1–glycine 100 is disordered. The span at phenylalanine 18–glutamine 30 shows a compositional bias: polar residues.

Belongs to the IFT46 family. Component of the IFT complex B, the core composed of IFT25, IFT27, IFT46, IFT52, IFT74, IFT81 and IFT88 as well as associated subunits IFT20, IFT57, IFT80 and IFT172. Interacts with IFT25, IFT52, IFT70, IFT88 and DAW1.

It is found in the cytoplasm. The protein resides in the cytoskeleton. It localises to the cilium basal body. The protein localises to the cell projection. Its subcellular location is the cilium. Functionally, forms part of a complex involved in intraflagellar transport (IFT), the bi-directional movement of particles required for the assembly, maintenance and functioning of primary cilia. Plays a role in maintaining IFT complex B stability. This chain is Intraflagellar transport protein 46, found in Chlamydomonas reinhardtii (Chlamydomonas smithii).